Consider the following 462-residue polypeptide: ATP synthase subunit beta (462 aa).

Residue 152-159 participates in ATP binding; that stretch reads GGAGVGKT.

The protein belongs to the ATPase alpha/beta chains family. In terms of assembly, F-type ATPases have 2 components, CF(1) - the catalytic core - and CF(0) - the membrane proton channel. CF(1) has five subunits: alpha(3), beta(3), gamma(1), delta(1), epsilon(1). CF(0) has three main subunits: a(1), b(2) and c(9-12). The alpha and beta chains form an alternating ring which encloses part of the gamma chain. CF(1) is attached to CF(0) by a central stalk formed by the gamma and epsilon chains, while a peripheral stalk is formed by the delta and b chains.

Its subcellular location is the cell inner membrane. It catalyses the reaction ATP + H2O + 4 H(+)(in) = ADP + phosphate + 5 H(+)(out). In terms of biological role, produces ATP from ADP in the presence of a proton gradient across the membrane. The catalytic sites are hosted primarily by the beta subunits. This chain is ATP synthase subunit beta, found in Blochmanniella pennsylvanica (strain BPEN).